The primary structure comprises 510 residues: Bifunctional purine biosynthesis protein PurH (510 aa).

An MGS-like domain is found at 1-142 (MRALISVSDK…KNFKDVLIVT (142 aa)).

Belongs to the PurH family.

The enzyme catalyses (6R)-10-formyltetrahydrofolate + 5-amino-1-(5-phospho-beta-D-ribosyl)imidazole-4-carboxamide = 5-formamido-1-(5-phospho-D-ribosyl)imidazole-4-carboxamide + (6S)-5,6,7,8-tetrahydrofolate. It carries out the reaction IMP + H2O = 5-formamido-1-(5-phospho-D-ribosyl)imidazole-4-carboxamide. It participates in purine metabolism; IMP biosynthesis via de novo pathway; 5-formamido-1-(5-phospho-D-ribosyl)imidazole-4-carboxamide from 5-amino-1-(5-phospho-D-ribosyl)imidazole-4-carboxamide (10-formyl THF route): step 1/1. The protein operates within purine metabolism; IMP biosynthesis via de novo pathway; IMP from 5-formamido-1-(5-phospho-D-ribosyl)imidazole-4-carboxamide: step 1/1. This Campylobacter curvus (strain 525.92) protein is Bifunctional purine biosynthesis protein PurH.